A 247-amino-acid chain; its full sequence is D-alanyl-D-alanine dipeptidase (247 aa).

Residues His140 and Asp147 each contribute to the Zn(2+) site. Residue Glu215 is the Proton donor/acceptor of the active site. Residue His218 coordinates Zn(2+).

This sequence belongs to the peptidase M15D family. It depends on Zn(2+) as a cofactor.

It localises to the cytoplasm. The catalysed reaction is D-alanyl-D-alanine + H2O = 2 D-alanine. Functionally, catalyzes hydrolysis of the D-alanyl-D-alanine dipeptide. May have a role in cell-wall turnover. The protein is D-alanyl-D-alanine dipeptidase of Synechocystis sp. (strain ATCC 27184 / PCC 6803 / Kazusa).